The sequence spans 517 residues: Lysophosphatidylcholine acyltransferase 2B (517 aa).

A glycan (N-linked (GlcNAc...) asparagine) is linked at Asn-29. 3 helical membrane passes run 70–90 (IVFLFLLLWPVALLSTINLPI), 103–123 (LIKPVFIFLLRLAFFCAGFLI), and 137–157 (IFVVAPHSTFFDAIAVIVAGL). Positions 143 to 148 (HSTFFD) match the HXXXXD motif motif. EF-hand domains lie at 388–423 (PISEPLRQLFSLFDRNQDGTIDFREYVIGLTVLCNP) and 425–460 (NTEKILQMSFKLFDLDEDGYITEQELTTMLRAAFGV). The Ca(2+) site is built by Asp-401, Asn-403, Asp-405, Thr-407, Glu-412, Asp-438, Asp-440, Asp-442, Tyr-444, and Glu-449.

This sequence belongs to the 1-acyl-sn-glycerol-3-phosphate acyltransferase family.

It localises to the membrane. It participates in lipid metabolism; phospholipid metabolism. In terms of biological role, probable acetyltransferase. The polypeptide is Lysophosphatidylcholine acyltransferase 2B (Lpcat2b) (Rattus norvegicus (Rat)).